The following is a 412-amino-acid chain: Mannose-6-phosphate isomerase (412 aa).

Positions 99, 101, 126, and 265 each coordinate Zn(2+). Residue Arg284 is part of the active site.

This sequence belongs to the mannose-6-phosphate isomerase type 1 family. Requires Zn(2+) as cofactor.

It localises to the cytoplasm. The protein resides in the nucleus. The catalysed reaction is D-mannose 6-phosphate = D-fructose 6-phosphate. The protein operates within nucleotide-sugar biosynthesis; GDP-alpha-D-mannose biosynthesis; alpha-D-mannose 1-phosphate from D-fructose 6-phosphate: step 1/2. In terms of biological role, involved in the synthesis of the GDP-mannose and dolichol-phosphate-mannose required for a number of critical mannosyl transfer reactions. The sequence is that of Mannose-6-phosphate isomerase (pmi40) from Schizosaccharomyces pombe (strain 972 / ATCC 24843) (Fission yeast).